A 366-amino-acid polypeptide reads, in one-letter code: Holliday junction branch migration complex subunit RuvB (366 aa).

The disordered stretch occupies residues 1-49 (MAIISSKKQPPEPNGQPNKRPESAPAAPKEKVLQPEAAIDEQGKQEESI). Residues 13–210 (PNGQPNKRPE…FGLIQKLRFY (198 aa)) are large ATPase domain (RuvB-L). Residues I49, R50, G91, K94, T95, T96, 157 to 159 (EDY), R200, Y210, and R247 contribute to the ATP site. Residue T95 coordinates Mg(2+). Residues 211 to 281 (EVDELSQIVL…IAAEALQLFQ (71 aa)) form a small ATPAse domain (RuvB-S) region. The head domain (RuvB-H) stretch occupies residues 284–366 (PCGLDWTDRR…TPPNEQLSLL (83 aa)). The DNA site is built by R339 and R344.

It belongs to the RuvB family. As to quaternary structure, homohexamer. Forms an RuvA(8)-RuvB(12)-Holliday junction (HJ) complex. HJ DNA is sandwiched between 2 RuvA tetramers; dsDNA enters through RuvA and exits via RuvB. An RuvB hexamer assembles on each DNA strand where it exits the tetramer. Each RuvB hexamer is contacted by two RuvA subunits (via domain III) on 2 adjacent RuvB subunits; this complex drives branch migration. In the full resolvosome a probable DNA-RuvA(4)-RuvB(12)-RuvC(2) complex forms which resolves the HJ.

It is found in the cytoplasm. The catalysed reaction is ATP + H2O = ADP + phosphate + H(+). In terms of biological role, the RuvA-RuvB-RuvC complex processes Holliday junction (HJ) DNA during genetic recombination and DNA repair, while the RuvA-RuvB complex plays an important role in the rescue of blocked DNA replication forks via replication fork reversal (RFR). RuvA specifically binds to HJ cruciform DNA, conferring on it an open structure. The RuvB hexamer acts as an ATP-dependent pump, pulling dsDNA into and through the RuvAB complex. RuvB forms 2 homohexamers on either side of HJ DNA bound by 1 or 2 RuvA tetramers; 4 subunits per hexamer contact DNA at a time. Coordinated motions by a converter formed by DNA-disengaged RuvB subunits stimulates ATP hydrolysis and nucleotide exchange. Immobilization of the converter enables RuvB to convert the ATP-contained energy into a lever motion, pulling 2 nucleotides of DNA out of the RuvA tetramer per ATP hydrolyzed, thus driving DNA branch migration. The RuvB motors rotate together with the DNA substrate, which together with the progressing nucleotide cycle form the mechanistic basis for DNA recombination by continuous HJ branch migration. Branch migration allows RuvC to scan DNA until it finds its consensus sequence, where it cleaves and resolves cruciform DNA. This is Holliday junction branch migration complex subunit RuvB from Trichormus variabilis (strain ATCC 29413 / PCC 7937) (Anabaena variabilis).